A 353-amino-acid chain; its full sequence is sn-glycerol-3-phosphate import ATP-binding protein UgpC (353 aa).

Residues 4 to 234 (ILLNDVRKSY…PASEFVAGFI (231 aa)) form the ABC transporter domain. Residue 36-43 (GPSGCGKS) coordinates ATP.

It belongs to the ABC transporter superfamily. sn-glycerol-3-phosphate importer (TC 3.A.1.1.3) family. In terms of assembly, the complex is composed of two ATP-binding proteins (UgpC), two transmembrane proteins (UgpA and UgpE) and a solute-binding protein (UgpB).

It is found in the cell inner membrane. The enzyme catalyses sn-glycerol 3-phosphate(out) + ATP + H2O = sn-glycerol 3-phosphate(in) + ADP + phosphate + H(+). Part of the ABC transporter complex UgpBAEC involved in sn-glycerol-3-phosphate (G3P) import. Responsible for energy coupling to the transport system. This Paracoccus denitrificans (strain Pd 1222) protein is sn-glycerol-3-phosphate import ATP-binding protein UgpC.